The primary structure comprises 196 residues: GTP cyclohydrolase 1 (196 aa).

Zn(2+) contacts are provided by cysteine 84, histidine 87, and cysteine 157.

This sequence belongs to the GTP cyclohydrolase I family. In terms of assembly, toroid-shaped homodecamer, composed of two pentamers of five dimers.

It catalyses the reaction GTP + H2O = 7,8-dihydroneopterin 3'-triphosphate + formate + H(+). It functions in the pathway cofactor biosynthesis; 7,8-dihydroneopterin triphosphate biosynthesis; 7,8-dihydroneopterin triphosphate from GTP: step 1/1. The sequence is that of GTP cyclohydrolase 1 from Corynebacterium glutamicum (strain ATCC 13032 / DSM 20300 / JCM 1318 / BCRC 11384 / CCUG 27702 / LMG 3730 / NBRC 12168 / NCIMB 10025 / NRRL B-2784 / 534).